The following is a 172-amino-acid chain: Glutamyl-tRNA(Gln) amidotransferase subunit C-3, mitochondrial (172 aa).

The interval 49 to 71 (KHPSKVPQRPNKSTIDGQSTPTR) is disordered. Over residues 58 to 71 (PNKSTIDGQSTPTR) the composition is skewed to polar residues.

It belongs to the GatC family. As to quaternary structure, subunit of the heterotrimeric GatCAB amidotransferase (AdT) complex, composed of A, B and C subunits.

It is found in the mitochondrion. The enzyme catalyses L-glutamyl-tRNA(Gln) + L-glutamine + ATP + H2O = L-glutaminyl-tRNA(Gln) + L-glutamate + ADP + phosphate + H(+). Functionally, allows the formation of correctly charged Gln-tRNA(Gln) through the transamidation of misacylated Glu-tRNA(Gln) in the mitochondria. The reaction takes place in the presence of glutamine and ATP through an activated gamma-phospho-Glu-tRNA(Gln). The protein is Glutamyl-tRNA(Gln) amidotransferase subunit C-3, mitochondrial of Culex quinquefasciatus (Southern house mosquito).